Reading from the N-terminus, the 363-residue chain is Protein EXORDIUM-like 5 (363 aa).

Residues 1 to 25 (MSSPATTITFFFFFTLSSFFYITSS) form the signal peptide. Asparagine 144 is a glycosylation site (N-linked (GlcNAc...) asparagine).

Belongs to the EXORDIUM family.

It is found in the secreted. Its subcellular location is the extracellular space. The protein localises to the apoplast. Its function is as follows. May play a role in a brassinosteroid-dependent regulation of growth and development. The sequence is that of Protein EXORDIUM-like 5 (EXL5) from Arabidopsis thaliana (Mouse-ear cress).